Reading from the N-terminus, the 115-residue chain is Photosystem II reaction center Psb28 protein (115 aa).

This sequence belongs to the Psb28 family. As to quaternary structure, part of the photosystem II complex.

The protein resides in the plastid. It is found in the chloroplast thylakoid membrane. The sequence is that of Photosystem II reaction center Psb28 protein from Pyropia yezoensis (Susabi-nori).